A 107-amino-acid polypeptide reads, in one-letter code: Flagellar hook-basal body complex protein FliE (107 aa).

This sequence belongs to the FliE family.

The protein localises to the bacterial flagellum basal body. The chain is Flagellar hook-basal body complex protein FliE from Sodalis glossinidius (strain morsitans).